A 217-amino-acid chain; its full sequence is MGRNKKKKKRDGDDRRPRLVLNFDEEKRREYLTGFHKRKVERKKAAIEEIKQRLKQEQKKLREERHQEYLKMLAEREEALEEADELERLVTAKTESVQYDHPNHTVTVTTISDLDLSGARLLGLPLPEQGDQDGSQEEEMSSLEKPTKALPRKSKDPLLSQRISSLTATLHAHSRKKVKRKHPRRAQDSTKKPPSATRTSKTQRRRRMTGKARHNGE.

A coiled-coil region spans residues 34–98; it reads GFHKRKVERK…LVTAKTESVQ (65 aa). The interval 122-217 is disordered; it reads LGLPLPEQGD…MTGKARHNGE (96 aa). Residues 130–141 are compositionally biased toward acidic residues; that stretch reads GDQDGSQEEEMS. Basic residues-rich tracts occupy residues 172–184 and 201–217; these read AHSRKKVKRKHPR and KTQRRRRMTGKARHNGE.

This sequence belongs to the RRP17 family. As to quaternary structure, interacts with KIAA1191. In terms of tissue distribution, expressed in brain, lung, spleen, kidney and heart.

Its subcellular location is the nucleus. It is found in the nucleolus. It localises to the cytoplasm. Its function is as follows. Multifunctional RNA binding protein that plays a role in RNA metabolism and DNA maintenance. Participates in the resolution of DNA stress and the maintenance of genome integrity by localizing to sites of DNA insults. Also plays a role in proper nucleolar organization by limiting nucleolar size and regulating nucleolar number. Mechanistically, regulates the nucleolar levels of fibrillarin and nucleolin, two key players in pre-rRNA processing and ribosome assembly. This Mus musculus (Mouse) protein is Nucleolar protein 12 (Nol12).